The chain runs to 122 residues: Large ribosomal subunit protein uL14 (122 aa).

It belongs to the universal ribosomal protein uL14 family. In terms of assembly, part of the 50S ribosomal subunit. Forms a cluster with proteins L3 and L19. In the 70S ribosome, L14 and L19 interact and together make contacts with the 16S rRNA in bridges B5 and B8.

In terms of biological role, binds to 23S rRNA. Forms part of two intersubunit bridges in the 70S ribosome. The sequence is that of Large ribosomal subunit protein uL14 from Aliarcobacter butzleri (strain RM4018) (Arcobacter butzleri).